The following is a 528-amino-acid chain: Neuronal acetylcholine receptor subunit alpha-2 (528 aa).

A signal peptide spans 1-23; it reads MGWPCRSIIPLLVWCFVTLQAAT. Topologically, residues 24 to 239 are extracellular; the sequence is REQKQPHGFA…ITFYFVIRRL (216 aa). N-linked (GlcNAc...) asparagine glycosylation is found at N54 and N104. Disulfide bonds link C158–C172 and C222–C223. 3 consecutive transmembrane segments (helical) span residues 240-264, 272-290, and 306-327; these read PLFY…VFYL, ITLC…LLIT, and YLLF…VLNV. Topologically, residues 328 to 501 are cytoplasmic; that stretch reads HHRSPSTHTM…WKYVAMVIDR (174 aa). Acidic residues predominate over residues 390-410; sequence DDKWEEEEEEEEEEEEEEEEE. A disordered region spans residues 390-427; the sequence is DDKWEEEEEEEEEEEEEEEEEKAYPSRVPSGGSQGTQC. A helical transmembrane segment spans residues 502–520; that stretch reads IFLWMFIIVCLLGTVGLFL.

Belongs to the ligand-gated ion channel (TC 1.A.9) family. Acetylcholine receptor (TC 1.A.9.1) subfamily. Alpha-2/CHRNA2 sub-subfamily. Neuronal AChR is composed of two different types of subunits: alpha and non-alpha (beta). CHRNA2/alpha-2 subunit can be combined to CHRNB2/beta-2 or CHRNB4/beta-4 to give rise to functional receptors. Both CHRNA2:CHRNB2 and CHRNA2:CHRNB4 nAChR complexes are heteropentamers with two subtypes: LS (low agonist sensitivity) with a (CHRNA2)3:(CHRNB2/4)2 and HS (high agonist sensitivity) with a (CHRNA2)2:(CHRNB2/4)3 stoichiometries; the subtypes differ in their subunit binding interfaces which are involved in ligand binding.

It localises to the synaptic cell membrane. The protein localises to the cell membrane. The enzyme catalyses Ca(2+)(in) = Ca(2+)(out). It catalyses the reaction K(+)(in) = K(+)(out). It carries out the reaction Na(+)(in) = Na(+)(out). In terms of biological role, component of neuronal acetylcholine receptors (nAChRs) that function as pentameric, ligand-gated cation channels with high calcium permeability among other activities. nAChRs are excitatory neurotrasnmitter receptors formed by a collection of nAChR subunits known to mediate synaptic transmission in the nervous system and the neuromuscular junction. Each nAchR subunit confers differential attributes to channel properties, including activation, deactivation and desensitization kinetics, pH sensitivity, cation permeability, and binding to allosteric modulators. CHRNA2 forms heteropentameric neuronal acetylcholine receptors with CHRNB2 and CHRNB4 and plays a role in nicotine dependence. This chain is Neuronal acetylcholine receptor subunit alpha-2 (CHRNA2), found in Gallus gallus (Chicken).